Consider the following 147-residue polypeptide: Phosphoribosyl-AMP cyclohydrolase (147 aa).

D91 contacts Mg(2+). C92 provides a ligand contact to Zn(2+). Residues D93 and D95 each contribute to the Mg(2+) site. Residues C108 and C115 each contribute to the Zn(2+) site.

Belongs to the PRA-CH family. As to quaternary structure, homodimer. Requires Mg(2+) as cofactor. It depends on Zn(2+) as a cofactor.

The protein localises to the cytoplasm. It catalyses the reaction 1-(5-phospho-beta-D-ribosyl)-5'-AMP + H2O = 1-(5-phospho-beta-D-ribosyl)-5-[(5-phospho-beta-D-ribosylamino)methylideneamino]imidazole-4-carboxamide. It participates in amino-acid biosynthesis; L-histidine biosynthesis; L-histidine from 5-phospho-alpha-D-ribose 1-diphosphate: step 3/9. Catalyzes the hydrolysis of the adenine ring of phosphoribosyl-AMP. The sequence is that of Phosphoribosyl-AMP cyclohydrolase from Rhodopseudomonas palustris (strain BisB5).